Consider the following 560-residue polypeptide: Cytosolic purine 5'-nucleotidase (560 aa).

Residue Asp52 is the Nucleophile of the active site. Residues Asp52 and Asp54 each contribute to the IMP site. Positions 52 and 54 each coordinate Mg(2+). The active-site Proton donor is Asp54. Residues Arg144 and Asn154 each contribute to the ATP site. IMP is bound by residues Arg202, Asp206, Lys215, Thr249, Asn250, Ser251, and Lys292. Asp351 serves as a coordination point for Mg(2+). A Phosphoserine modification is found at Ser418. The ATP site is built by Gln453 and Arg456. A phosphoserine mark is found at Ser502, Ser511, and Ser527. The tract at residues 541–560 (PQEITHCHDEDDDEEEEEEE) is disordered. Residues 548–560 (HDEDDDEEEEEEE) are required for tetramer assembly. Residues 550–560 (EDDDEEEEEEE) show a composition bias toward acidic residues.

Belongs to the 5'(3')-deoxyribonucleotidase family. Homotetramer. Requires Mg(2+) as cofactor.

The protein localises to the cytoplasm. The protein resides in the cytosol. It carries out the reaction a ribonucleoside 5'-phosphate + H2O = a ribonucleoside + phosphate. It catalyses the reaction a 2'-deoxyribonucleoside + a ribonucleoside 5'-phosphate = a ribonucleoside + a 2'-deoxyribonucleoside 5'-phosphate. The enzyme catalyses IMP + H2O = inosine + phosphate. The catalysed reaction is GMP + H2O = guanosine + phosphate. It carries out the reaction dIMP + H2O = 2'-deoxyinosine + phosphate. It catalyses the reaction dGMP + H2O = 2'-deoxyguanosine + phosphate. The enzyme catalyses XMP + H2O = xanthosine + phosphate. The catalysed reaction is inosine + GMP = guanosine + IMP. It carries out the reaction dGMP + inosine = 2'-deoxyguanosine + IMP. It catalyses the reaction dIMP + inosine = 2'-deoxyinosine + IMP. The enzyme catalyses inosine + UMP = uridine + IMP. The catalysed reaction is inosine + CMP = cytidine + IMP. It carries out the reaction inosine + AMP = IMP + adenosine. Allosterically activated by various compounds including ATP, 2,3-BPG/2,3-Bisphosphoglyceric acid and Ap4A/P1,P4-bis(5'-adenosyl) tetraphosphate. Binding of an allosteric activator is a prerequisiste to magnesium and substrate binding. Inhibited by inorganic phosphate. Broad specificity cytosolic 5'-nucleotidase that catalyzes the dephosphorylation of 6-hydroxypurine nucleoside 5'-monophosphates. In addition, possesses a phosphotransferase activity by which it can transfer a phosphate from a donor nucleoside monophosphate to an acceptor nucleoside, preferably inosine, deoxyinosine and guanosine. Has the highest activities for IMP and GMP followed by dIMP, dGMP and XMP. Could also catalyze the transfer of phosphates from pyrimidine monophosphates but with lower efficiency. Through these activities regulates the purine nucleoside/nucleotide pools within the cell. In Bos taurus (Bovine), this protein is Cytosolic purine 5'-nucleotidase.